The following is a 675-amino-acid chain: PML-RARA-regulated adapter molecule 1 (675 aa).

The span at 1–19 (MGSNQDFRNLQAKFQTSQP) shows a compositional bias: polar residues. 2 disordered regions span residues 1–473 (MGSN…GPIN) and 523–562 (TDDS…PQQL). The segment covering 23–35 (ELFRKTPKPELNK) has biased composition (basic and acidic residues). A compositionally biased stretch (polar residues) spans 43-58 (TELSEQPKKSSQSELS). Positions 141–150 (PKPEFGELSK) are enriched in basic and acidic residues. Composition is skewed to polar residues over residues 224–242 (RKSQ…SPSK), 251–264 (HSPQ…PKNN), and 322–331 (LQPSDLTRAS). Phosphoserine is present on Ser374. Residues 407 to 422 (SECSLPSASAGSSPQC) are compositionally biased toward polar residues. Over residues 462–471 (PAKPALPPGP) the composition is skewed to pro residues. Polar residues predominate over residues 537–546 (LSTQQATRWP). Positions 578 to 656 (KAEREFRKKF…PRTALLPLET (79 aa)) constitute an SH3 domain.

As to quaternary structure, interacts with SKAP2, LCP2 and DBNL. May interact with LYN. Interacts with NEK6. May be phosphorylated on tyrosines. Expressed in bone marrow and mature neutrophils. Weakly expressed in macrophages and mast cells.

In terms of biological role, may be involved in integrin signaling in neutrophils. Binds to PtdIns(4)P. The chain is PML-RARA-regulated adapter molecule 1 (Pram1) from Mus musculus (Mouse).